We begin with the raw amino-acid sequence, 155 residues long: NADH-ubiquinone oxidoreductase chain 6 (155 aa).

Transmembrane regions (helical) follow at residues Ile-10–Val-30, Leu-43–Ile-63, Gly-75–Ser-95, and Ala-133–Ile-153.

It belongs to the complex I subunit 6 family.

Its subcellular location is the mitochondrion membrane. The enzyme catalyses a ubiquinone + NADH + 5 H(+)(in) = a ubiquinol + NAD(+) + 4 H(+)(out). In terms of biological role, core subunit of the mitochondrial membrane respiratory chain NADH dehydrogenase (Complex I) that is believed to belong to the minimal assembly required for catalysis. Complex I functions in the transfer of electrons from NADH to the respiratory chain. The immediate electron acceptor for the enzyme is believed to be ubiquinone. This chain is NADH-ubiquinone oxidoreductase chain 6 (ND6), found in Candida parapsilosis (Yeast).